The sequence spans 448 residues: Phosphoglucosamine mutase (448 aa).

The Phosphoserine intermediate role is filled by Ser99. The Mg(2+) site is built by Ser99, Asp238, Asp240, and Asp242. Ser99 is subject to Phosphoserine.

It belongs to the phosphohexose mutase family. Requires Mg(2+) as cofactor. Post-translationally, activated by phosphorylation.

It catalyses the reaction alpha-D-glucosamine 1-phosphate = D-glucosamine 6-phosphate. Functionally, catalyzes the conversion of glucosamine-6-phosphate to glucosamine-1-phosphate. In Marinomonas sp. (strain MWYL1), this protein is Phosphoglucosamine mutase.